Consider the following 600-residue polypeptide: CoA ligase FVEG_12633 (600 aa).

ATP is bound by residues Thr-170 to Thr-174, His-214, Ala-321 to Leu-323, and Glu-342 to Arg-343. The SBD1 stretch occupies residues Asn-241–Glu-342. Residues Arg-343–Tyr-420 form an SBD2 region. Met-346 lines the substrate pocket. 4 residues coordinate ATP: Thr-347, Asp-441, Arg-471, and Lys-564. Position 564 (Lys-564) interacts with oxalate.

Belongs to the ATP-dependent AMP-binding enzyme family.

Its function is as follows. CoA ligase; part of the Fusarium detoxification of benzoxazolinone cluster 2 (FDB2) involved in the degradation of benzoxazolinones produced by the host plant. Maize, wheat, and rye produce the 2 benzoxazinone phytoanticipins 2,4-dihy-droxy-7-methoxy-1,4-benzoxazin-3-one (DIMBOA) and 2,4-dihydroxy-1,4-benzoxazin-3-one (DIBOA) that, due to their inherent instability once released, spontaneously degrade to the more stable corresponding benzoxazolinones, 6-methoxy-2-benzoxazolinone (MBOA) and 2-benzoxazolinone (BOA), respectively. The first step in the detoxification of benzoxazolinones involves the hydrolysis of the cyclic ester bond of benzoxazolinones by the FDB1 cluster gamma-lactamase MBL1 to aminophenols. MBL1 is able to convert BOA into 2-aminophenol (2-AP), as well as MBOA into 5-methoxy-2-aminophenol (2-AMP). The FDB2 cluster N-malonyltransferase FDB2/NAT1 then metabolizes aminophenols via N-malonylation to non-toxic malonamic acids. FDB2/NAT1 converts 2-AP into N-(2-hydroxyphenyl) malonamic acid (HPMA) and 2-AMP into N-(2-hydroxy-4-methoxyphenyl) malonamic acid (HMPMA). The duplicated dienlactone hydrolases DLH1 and DLH2 may provide redundant function for hydrolyzing the lactone moiety in the BOA molecule. The roles of the amidases an other enzymes encoded by the 2 FDB clusters have not been identified so far. The polypeptide is CoA ligase FVEG_12633 (Gibberella moniliformis (strain M3125 / FGSC 7600) (Maize ear and stalk rot fungus)).